The following is a 369-amino-acid chain: Cobalt-precorrin-5B C(1)-methyltransferase (369 aa).

The protein belongs to the CbiD family.

It carries out the reaction Co-precorrin-5B + S-adenosyl-L-methionine = Co-precorrin-6A + S-adenosyl-L-homocysteine. It participates in cofactor biosynthesis; adenosylcobalamin biosynthesis; cob(II)yrinate a,c-diamide from sirohydrochlorin (anaerobic route): step 6/10. Its function is as follows. Catalyzes the methylation of C-1 in cobalt-precorrin-5B to form cobalt-precorrin-6A. The polypeptide is Cobalt-precorrin-5B C(1)-methyltransferase (Prosthecochloris aestuarii (strain DSM 271 / SK 413)).